Reading from the N-terminus, the 988-residue chain is MAPPMTLQQWIIWNKMNKAHEALQNSTTVTDQQKEQIILEIQNEEVRPTRKDKIRYLLYTCCATSSRVLAWMLLVCVLLIVVLVSCFLTISRIQWNRDIQVLGPVIDWNVTQRAVYQPLQTRRIARSLRMQHPVPKYIEVNMTSIPQGVYYEPHPEPIVVTERVLGLSQVLMINSENIANNANLTQEVKKLLAEVVNEEMQSLSDVMIDFEIPLGDPRDQEQYIHRKCYQEFAHCYLVKYKTPKSWPTEGLIADQCPLPGYHAGLSYKPQSIWDYYIKVEITRPANWSSQAVYGQARLGSFYVPKGIRQNNYSHVLFCSDQLYSKWYNIENSIEQNEKFLLNKLDNLTTGSSLLKKRALPKEWSSQGKNALFKEINVLDVCSKPELVILLNTSYYSFSLWEGDCNFTKNMISQLVPECEGFYNNSKWMHMHPYACRFWRSKNEKEETKCRPGEKEKCLYYPYQDSLESTYDFGFLAYQKNFPAPICIEQQEIRDKDYEVYSLYQECKLASKVHGIDTVLFSLKNFLNHTGRPVNEMPNARAFVGLVDPKFPPSYPNVTREHYTSCNNRKRRSTDNNYAKLKSMGYALTGAVQTLSQISDINDENLQQGIYLLRDHVITLMEATLHDISVMEGMFAVQHLHTHLNHLKTMLLERRIDWTYMSSAWLQQQLQKSDDEMKVIKRIAKSLVYYVKQTYNSPTATAWEIGLYYELTIPKHVYLNNWNVVNIGHLVQSAGQLTHVTIAHPYEIINKECTETKYLHLKDCRRQDYVICDVVEIVQPCGNSTDTSDCPVWAEAVKEPFVQVNPLKNGSYLVLASSTDCQIPPYVPSIVTVNETTSCYGLNFKKPLVAEERLGFEPRLPNLQLRLPHLVGIIAKIKGLKIEVTSSGESIKDQIERAKAELLRLDIHEGDTPAWIQQLAAATKDVWPAAASALQGIGNFLSGAAHGIFGTAFSLLGYLKPILIGVGVILLIILIFKIVSWIPTKKKSQ.

The interval 1–15 is involved in virion budding; it reads MAPPMTLQQWIIWNK. Topologically, residues 1-65 are cytoplasmic; sequence MAPPMTLQQW…YLLYTCCATS (65 aa). Glycyl lysine isopeptide (Lys-Gly) (interchain with G-Cter in ubiquitin) cross-links involve residues Lys15, Lys18, Lys34, and Lys53. A helical; Signal-anchor for type III membrane protein transmembrane segment spans residues 66 to 88; the sequence is SRVLAWMLLVCVLLIVVLVSCFL. The Lumenal segment spans residues 89–960; that stretch reads TISRIQWNRD…AFSLLGYLKP (872 aa). 11 N-linked (GlcNAc...) asparagine; by host glycosylation sites follow: Asn109, Asn141, Asn183, Asn286, Asn311, Asn346, Asn391, Asn405, Asn423, Asn527, and Asn556. Positions 576–598 are fusion peptide; that stretch reads NYAKLKSMGYALTGAVQTLSQIS. 3 N-linked (GlcNAc...) asparagine; by host glycosylation sites follow: Asn782, Asn808, and Asn833. A helical transmembrane segment spans residues 961–981; the sequence is ILIGVGVILLIILIFKIVSWI. The Cytoplasmic portion of the chain corresponds to 982-988; the sequence is PTKKKSQ. The short motif at 984–986 is the Endoplasmic reticulum retention signal element; it reads KKK.

The mature envelope protein consists of a trimer of SU-TM heterodimers. The N-terminus of leader peptide specifically interacts with Gag protein. This specific interaction between Gag protein and Env glycoprotein may allow particle egress. In terms of processing, envelope glycoproteins are synthesized as an inactive precursor that is processed by host furin or a furin-like proprotein convertase (PC)-mediated cleavage proteolysis to yield a functional heterooligomeric complex. Further proteolytically processed through regulated intramembrane proteolysis either by SPPL2A and SPPL2B or by SPPL3 in a PC-mediated cleavage-dependent or -independent manner, respectively. The transmembrane protein and the surface protein are N-glycosylated. Post-translationally, mono- and polyubiquitinated leader peptide are found in viral particles. Ubiquitination may be involved in regulating the balance between viral and subviral particles release.

The protein resides in the host endoplasmic reticulum membrane. The protein localises to the virion membrane. In terms of biological role, the surface protein (SU) attaches the virus to the host cell by binding to the cell receptor. This interaction triggers the refolding of transmembrane protein (TM) and is thought to activate its fusogenic potential by unmasking its fusion peptide. The transmembrane protein (TM) acts as a class I viral fusion protein. Under the current model, the protein has at least 3 conformational states: pre-fusion native state, pre-hairpin intermediate state, and post-fusion hairpin state. During viral and target cell membrane fusion, the coiled coil regions (heptad repeats) assume a trimer-of-hairpins structure, positioning the fusion peptide in close proximity to the C-terminal region of the ectodomain. The formation of this structure appears to drive apposition and subsequent fusion of viral and target cell membranes. Membranes fusion leads to delivery of the nucleocapsid into the cytoplasm. Its function is as follows. The leader peptide is a component of released, infectious virions and is required for particle budding. This Pan troglodytes (Chimpanzee) protein is Envelope glycoprotein gp130 (env).